The following is a 410-amino-acid chain: Arginine deiminase (410 aa).

Cys-400 (amidino-cysteine intermediate) is an active-site residue.

The protein belongs to the arginine deiminase family.

It localises to the cytoplasm. The catalysed reaction is L-arginine + H2O = L-citrulline + NH4(+). It participates in amino-acid degradation; L-arginine degradation via ADI pathway; carbamoyl phosphate from L-arginine: step 1/2. The polypeptide is Arginine deiminase (Streptococcus agalactiae serotype III (strain NEM316)).